The primary structure comprises 361 residues: Aminomethyltransferase (361 aa).

This sequence belongs to the GcvT family. As to quaternary structure, the glycine cleavage system is composed of four proteins: P, T, L and H.

It catalyses the reaction N(6)-[(R)-S(8)-aminomethyldihydrolipoyl]-L-lysyl-[protein] + (6S)-5,6,7,8-tetrahydrofolate = N(6)-[(R)-dihydrolipoyl]-L-lysyl-[protein] + (6R)-5,10-methylene-5,6,7,8-tetrahydrofolate + NH4(+). Functionally, the glycine cleavage system catalyzes the degradation of glycine. This is Aminomethyltransferase from Herpetosiphon aurantiacus (strain ATCC 23779 / DSM 785 / 114-95).